The following is a 125-amino-acid chain: Small ribosomal subunit protein uS12c (125 aa).

Belongs to the universal ribosomal protein uS12 family. In terms of assembly, part of the 30S ribosomal subunit.

The protein resides in the plastid. The protein localises to the chloroplast. With S4 and S5 plays an important role in translational accuracy. Located at the interface of the 30S and 50S subunits. The protein is Small ribosomal subunit protein uS12c (rps12) of Tupiella akineta (Green alga).